The sequence spans 410 residues: Sensor histidine kinase GlnK (410 aa).

Residues methionine 1–proline 15 lie on the Extracellular side of the membrane. A helical membrane pass occupies residues leucine 16–leucine 36. Over arginine 37–histidine 38 the chain is Cytoplasmic. Residues valine 39 to leucine 59 form a helical membrane-spanning segment. Residues glutamate 60–proline 71 lie on the Extracellular side of the membrane. The helical transmembrane segment at isoleucine 72 to isoleucine 92 threads the bilayer. At leucine 93–proline 102 the chain is on the cytoplasmic side. A helical membrane pass occupies residues isoleucine 103–valine 123. Topologically, residues glutamine 124–aspartate 139 are extracellular. The chain crosses the membrane as a helical span at residues isoleucine 140–leucine 160. At tyrosine 161–glycine 410 the chain is on the cytoplasmic side. The Histidine kinase domain maps to valine 189–histidine 405. Phosphohistidine; by autocatalysis is present on histidine 190.

As to quaternary structure, homotrimer. Under poor nitrogen source such as nitrate, the complex between GlnK and AmtB, which are the transmembrane ammonium transporter and its cognate regulator, respectively, interacts with TnrA. GlnK-ATP complex are not able to bind TnrA.

It is found in the cell membrane. The enzyme catalyses ATP + protein L-histidine = ADP + protein N-phospho-L-histidine.. Functionally, member of the two-component regulatory system GlnK/GlnL that positively regulates the expression of the glsA-glnT operon in response to glutamine. It seems that autophosphorylated GlnK transfers a phosphoryl group to GlnL, which positively regulates the expression of the glsA-glnT operon. Interaction between GlnK-AmtB complex and TnrA protects TnrA from proteolytic degradation. The polypeptide is Sensor histidine kinase GlnK (Bacillus subtilis (strain 168)).